Reading from the N-terminus, the 649-residue chain is Replication factor C small subunit (649 aa).

Position 55–385 (55–385) interacts with ATP; it reads GPAGVGKCVT…GCIPTVMHNT (331 aa).

The protein belongs to the activator 1 small subunits family. RfcS subfamily. In terms of assembly, heteromultimer composed of small subunits (RfcS) and large subunits (RfcL). Post-translationally, this protein undergoes a protein self splicing that involves a post-translational excision of the intervening region (intein) followed by peptide ligation.

In terms of biological role, part of the RFC clamp loader complex which loads the PCNA sliding clamp onto DNA. The sequence is that of Replication factor C small subunit (rfcS) from Haloquadratum walsbyi (strain DSM 16790 / HBSQ001).